An 810-amino-acid chain; its full sequence is Hemoglobin-haptoglobin utilization protein B (810 aa).

The signal sequence occupies residues 1-22 (MPIPFKPVLAAAAIAQAFPAFA). The TBDR plug domain maps to 34 to 166 (NEITVTGTHK…LGGAVNYQTK (133 aa)). The TBDR beta-barrel domain maps to 175–810 (DKPYHLGIKG…SYNFTIEAKF (636 aa)). A TonB C-terminal box motif is present at residues 793–810 (QRFTSPGRSYNFTIEAKF).

It belongs to the TonB-dependent receptor family.

Its subcellular location is the cell outer membrane. Functionally, acts as a receptor for hemoglobin or the hemoglobin/haptoglobin complex and is required for heme uptake. This Neisseria meningitidis serogroup A / serotype 4A (strain DSM 15465 / Z2491) protein is Hemoglobin-haptoglobin utilization protein B (hpuB).